Here is a 534-residue protein sequence, read N- to C-terminus: ATP synthase subunit beta 2 (534 aa).

Residue 185–192 participates in ATP binding; sequence GGAGVGKT. Residues 494 to 505 show a composition bias toward basic and acidic residues; it reads AAAREADARREA. Residues 494–534 are disordered; that stretch reads AAAREADARREAAAAASGAGPGTTSDPASGSAEPQGARHGR.

Belongs to the ATPase alpha/beta chains family. F-type ATPases have 2 components, CF(1) - the catalytic core - and CF(0) - the membrane proton channel. CF(1) has five subunits: alpha(3), beta(3), gamma(1), delta(1), epsilon(1). CF(0) has three main subunits: a(1), b(2) and c(9-12). The alpha and beta chains form an alternating ring which encloses part of the gamma chain. CF(1) is attached to CF(0) by a central stalk formed by the gamma and epsilon chains, while a peripheral stalk is formed by the delta and b chains.

It is found in the cell inner membrane. The enzyme catalyses ATP + H2O + 4 H(+)(in) = ADP + phosphate + 5 H(+)(out). Functionally, produces ATP from ADP in the presence of a proton gradient across the membrane. The catalytic sites are hosted primarily by the beta subunits. The polypeptide is ATP synthase subunit beta 2 (Burkholderia mallei (strain NCTC 10247)).